The sequence spans 429 residues: Xyloglucan O-acetyltransferase 1 (429 aa).

Over 1–20 (MGSPFKDHHHHHHPFSLAKK) the chain is Cytoplasmic. Residues 21 to 41 (LIPWTFYAMIPLVLFRLYFYP) form a helical; Signal-anchor for type II membrane protein membrane-spanning segment. Residues 42-429 (YPLHNITTPI…KWDYESRREE (388 aa)) are Lumenal-facing. N-linked (GlcNAc...) asparagine glycosylation is found at asparagine 46 and asparagine 89. Intrachain disulfides connect cysteine 72–cysteine 122, cysteine 93–cysteine 158, cysteine 102–cysteine 402, and cysteine 317–cysteine 398. A GDS motif motif is present at residues 145–147 (GDS). The active-site Nucleophile is serine 147. N-linked (GlcNAc...) asparagine glycans are attached at residues asparagine 189, asparagine 263, and asparagine 351. The Proton donor role is filled by aspartate 397. The short motif at 397–400 (DCVH) is the DXXH motif element. Catalysis depends on histidine 400, which acts as the Proton acceptor.

This sequence belongs to the PC-esterase family. TBL subfamily.

The protein resides in the golgi apparatus membrane. Functionally, xyloglucan acetyltransferase that catalyzes the acetylation of fucosylated Gal residues on xyloglucan side chains. Predominantly catalyze 6-O-monoacetylation of Gal residues in the Fuc-Gal-Xyl trisaccharide side chains of xyloglucan oligomers. This Populus trichocarpa (Western balsam poplar) protein is Xyloglucan O-acetyltransferase 1.